A 222-amino-acid polypeptide reads, in one-letter code: Thiol:disulfide interchange protein DsbL (222 aa).

The N-terminal stretch at 1–27 is a signal peptide; the sequence is MSAKWINSIFKSVVLTAALALPFTASA. Residues 28-221 enclose the Thioredoxin domain; the sequence is FTEGTDYMVL…MAQLVRELAT (194 aa). A disulfide bridge links Cys56 with Cys59.

Belongs to the thioredoxin family. DsbL subfamily. In terms of assembly, interacts with DsbI.

The protein localises to the periplasm. In terms of biological role, involved in disulfide-bond formation. Acts by transferring its disulfide bond to other proteins. Part of a redox system composed of DsbI and DsbL that mediates formation of an essential disulfide bond in AssT. In Lelliottia amnigena (Enterobacter amnigenus), this protein is Thiol:disulfide interchange protein DsbL.